We begin with the raw amino-acid sequence, 82 residues long: Kappa-actitoxin-Avd4j (82 aa).

A signal peptide spans 1-19; the sequence is MNKALFLCLVVLCAAVVFA. Positions 20-31 are excised as a propeptide; that stretch reads AEDLQKAKHAPF. Disulfide bonds link cysteine 38-cysteine 73, cysteine 40-cysteine 66, and cysteine 56-cysteine 74.

This sequence belongs to the sea anemone type 3 (BDS) potassium channel toxin family. In terms of tissue distribution, weakly expressed in the ectodermal tissue from the distal and proximal tentacles, body wall, and oral disk.

It localises to the secreted. Its subcellular location is the nematocyst. Functionally, blocks Kv3 voltage-gated potassium channels. Reduces blood pressure. This chain is Kappa-actitoxin-Avd4j, found in Anemonia viridis (Snakelocks anemone).